The sequence spans 1023 residues: StAR-related lipid transfer protein 8 (1023 aa).

Disordered stretches follow at residues 46 to 67 (PMGS…SSCE) and 82 to 161 (TVSL…KVSK). Residues 99-114 (PSSSDRPLLSPTQGQE) are compositionally biased toward polar residues. A Phosphoserine modification is found at Ser-108. Over residues 120–130 (AKKRHRNRSFL) the composition is skewed to basic residues. Polar residues predominate over residues 143–161 (GSQQAEPKHSPATSEKVSK). Arg-169 carries the post-translational modification Asymmetric dimethylarginine. Residues Ser-235 and Ser-238 each carry the phosphoserine modification. Low complexity predominate over residues 387-397 (PAQAPAEAEPV). 2 disordered regions span residues 387 to 461 (PAQA…MNEA) and 467 to 486 (LAGL…VGAS). The segment covering 441–459 (ISDTVASSSELDSSGNSMN) has biased composition (polar residues). Ser-498 and Ser-506 each carry phosphoserine. One can recognise a Rho-GAP domain in the interval 573–777 (PPLIHVQRTG…HMISDCKKLF (205 aa)). The segment at 733–757 (KKDSPSPRIKSKRSLIGRPGPRDLS) is disordered. One can recognise an START domain in the interval 809–1017 (AQAAGVSLSL…RDSFPTLQAA (209 aa)).

As to quaternary structure, binds both the SH2 and PTB domains of TNS1. As to expression, widely expressed with highest levels in kidney, lung and placenta.

The protein localises to the cell junction. Its subcellular location is the focal adhesion. Functionally, accelerates GTPase activity of RHOA and CDC42, but not RAC1. Stimulates the hydrolysis of phosphatidylinositol 4,5-bisphosphate by PLCD1. This is StAR-related lipid transfer protein 8 (STARD8) from Homo sapiens (Human).